The sequence spans 479 residues: Ribosomal RNA small subunit methyltransferase F (479 aa).

S-adenosyl-L-methionine is bound by residues 125–131 (AAAPGSK), glutamate 149, aspartate 176, and aspartate 194. Residue cysteine 247 is the Nucleophile of the active site.

This sequence belongs to the class I-like SAM-binding methyltransferase superfamily. RsmB/NOP family.

It localises to the cytoplasm. The enzyme catalyses cytidine(1407) in 16S rRNA + S-adenosyl-L-methionine = 5-methylcytidine(1407) in 16S rRNA + S-adenosyl-L-homocysteine + H(+). Its function is as follows. Specifically methylates the cytosine at position 1407 (m5C1407) of 16S rRNA. The chain is Ribosomal RNA small subunit methyltransferase F from Escherichia coli O139:H28 (strain E24377A / ETEC).